Reading from the N-terminus, the 361-residue chain is Glyceraldehyde-3-phosphate dehydrogenase, glycosomal (361 aa).

Residues 13–14 (RI), Asp-39, and Arg-93 each bind NAD(+). D-glyceraldehyde 3-phosphate-binding positions include 166 to 168 (SCT), Thr-198, 227 to 228 (TG), and Arg-250. The Nucleophile role is filled by Cys-167. Asn-336 serves as a coordination point for NAD(+). Positions 359–361 (SKL) match the Microbody targeting signal motif.

It belongs to the glyceraldehyde-3-phosphate dehydrogenase family. As to quaternary structure, homotetramer.

The protein localises to the glycosome. It carries out the reaction D-glyceraldehyde 3-phosphate + phosphate + NAD(+) = (2R)-3-phospho-glyceroyl phosphate + NADH + H(+). Its pathway is carbohydrate degradation; glycolysis; pyruvate from D-glyceraldehyde 3-phosphate: step 1/5. The protein is Glyceraldehyde-3-phosphate dehydrogenase, glycosomal (GAPDG) of Crithidia fasciculata.